The primary structure comprises 89 residues: RLLDDTPEVKVLGAVADAIETPKAEPCIDLDVAGEATFAREDDLPDYVLYAEVTFHEICRDGGSESEGKNGSQMRLIADVGPESATVAK.

A disulfide bridge links C27 with C59. The segment at 61–89 (DGGSESEGKNGSQMRLIADVGPESATVAK) is disordered.

In terms of biological role, tuberculin is the soluble, proteinaceous cell substance of the bacterium, to which infected animals become hypersensitive and react characteristically to dermal injections. The protein is Tuberculin-active protein of Mycobacterium tuberculosis.